The chain runs to 428 residues: 3-phosphoshikimate 1-carboxyvinyltransferase (428 aa).

Positions 22, 23, and 27 each coordinate 3-phosphoshikimate. Residue Lys22 participates in phosphoenolpyruvate binding. Positions 96 and 124 each coordinate phosphoenolpyruvate. Residues Ser170, Ser171, Gln172, Ser198, Asp314, Asn337, and Lys341 each contribute to the 3-phosphoshikimate site. A phosphoenolpyruvate-binding site is contributed by Gln172. Residue Asp314 is the Proton acceptor of the active site. Residues Arg345, Arg387, and Lys412 each contribute to the phosphoenolpyruvate site.

This sequence belongs to the EPSP synthase family. As to quaternary structure, monomer.

The protein resides in the cytoplasm. It carries out the reaction 3-phosphoshikimate + phosphoenolpyruvate = 5-O-(1-carboxyvinyl)-3-phosphoshikimate + phosphate. The protein operates within metabolic intermediate biosynthesis; chorismate biosynthesis; chorismate from D-erythrose 4-phosphate and phosphoenolpyruvate: step 6/7. Its function is as follows. Catalyzes the transfer of the enolpyruvyl moiety of phosphoenolpyruvate (PEP) to the 5-hydroxyl of shikimate-3-phosphate (S3P) to produce enolpyruvyl shikimate-3-phosphate and inorganic phosphate. The sequence is that of 3-phosphoshikimate 1-carboxyvinyltransferase from Shewanella amazonensis (strain ATCC BAA-1098 / SB2B).